Here is a 531-residue protein sequence, read N- to C-terminus: Polypyrimidine tract-binding protein 2 (531 aa).

At Met-1 the chain carries N-acetylmethionine. Residues Ser-26 and Ser-27 each carry the phosphoserine modification. RRM domains follow at residues 59-133 (RVLH…YSNH) and 181-257 (LRII…FSKL). Ser-308 carries the phosphoserine modification. 2 RRM domains span residues 338-412 (TVLL…LSKH) and 455-529 (ATLH…FSKS).

As to quaternary structure, monomer. Interacts with NOVA1; the interaction is direct. Identified in a mRNP complex, at least composed of DHX9, DDX3X, ELAVL1, HNRNPU, IGF2BP1, ILF3, PABPC1, PCBP2, PTBP2, STAU1, STAU2, SYNCRIP and YBX1. Part of a ternary complex containing KHSRP and HNRPH1. Interacts with NOVA2; the interaction is direct. In terms of tissue distribution, mainly expressed in brain although also detected in other tissues like heart and skeletal muscle. Isoform 1 and isoform 2 are specifically expressed in neuronal tissues. Isoform 3 and isoform 4 are expressed in non-neuronal tissues. Isoform 5 and isoform 6 are truncated forms expressed in non-neuronal tissues.

It is found in the nucleus. RNA-binding protein which binds to intronic polypyrimidine tracts and mediates negative regulation of exons splicing. May antagonize in a tissue-specific manner the ability of NOVA1 to activate exon selection. In addition to its function in pre-mRNA splicing, plays also a role in the regulation of translation. Its function is as follows. Reduced affinity for RNA. In Homo sapiens (Human), this protein is Polypyrimidine tract-binding protein 2.